The primary structure comprises 358 residues: F-box protein At4g35733 (358 aa).

The F-box domain maps to 4-51; that stretch reads ATVWSDLPGELLDHIANGLFSKVELLRFRSICKTFRSAVDSDKNFLDH.

Part of a SCF (ASK-cullin-F-box) protein ligase complex.

The protein operates within protein modification; protein ubiquitination. Functionally, component of SCF(ASK-cullin-F-box) E3 ubiquitin ligase complexes, which may mediate the ubiquitination and subsequent proteasomal degradation of target proteins. This Arabidopsis thaliana (Mouse-ear cress) protein is F-box protein At4g35733.